We begin with the raw amino-acid sequence, 347 residues long: Ubiquitin thioesterase Otu1 (347 aa).

The 83-residue stretch at 5–87 (FSVKLKSKKG…LIVEEKAAPA (83 aa)) folds into the Ubiquitin-like domain. Residues 8 to 89 (KLKSKKGQFI…VEEKAAPAPA (82 aa)) are UBX-like. Positions 150–274 (LLKKVVPADN…GIHYDPLYME (125 aa)) constitute an OTU domain. The segment at 155-161 (VPADNSC) is cys-loop. Residue aspartate 158 is part of the active site. The Nucleophile role is filled by cysteine 161. The variable-loop stretch occupies residues 213-223 (IQKADSWGGAI). The tract at residues 263-267 (FDGIH) is his-loop. Substrate is bound at residue isoleucine 266. Histidine 267 is a catalytic residue. Residues 290–295 (LGVYQQ) are S2 site. The segment at 317 to 341 (LRCMQCDVRLVGQVQAQEHAKQTGH) adopts a C2H2-type zinc-finger fold. Histidine 341 is an active-site residue.

The enzyme catalyses Thiol-dependent hydrolysis of ester, thioester, amide, peptide and isopeptide bonds formed by the C-terminal Gly of ubiquitin (a 76-residue protein attached to proteins as an intracellular targeting signal).. Its function is as follows. Hydrolase that can remove conjugated ubiquitin from proteins and may therefore play an important regulatory role at the level of protein turnover by preventing degradation. Involved in the regulation of DNA damage repair. The chain is Ubiquitin thioesterase Otu1 from Drosophila melanogaster (Fruit fly).